The following is a 466-amino-acid chain: A-type ATP synthase subunit B 2 (466 aa).

It belongs to the ATPase alpha/beta chains family. As to quaternary structure, has multiple subunits with at least A(3), B(3), C, D, E, F, H, I and proteolipid K(x).

It is found in the cell membrane. Its function is as follows. Component of the A-type ATP synthase that produces ATP from ADP in the presence of a proton gradient across the membrane. The B chain is a regulatory subunit. The polypeptide is A-type ATP synthase subunit B 2 (Methanospirillum hungatei JF-1 (strain ATCC 27890 / DSM 864 / NBRC 100397 / JF-1)).